A 151-amino-acid polypeptide reads, in one-letter code: Deoxyuridine 5'-triphosphate nucleotidohydrolase (151 aa).

Substrate contacts are provided by residues 70 to 72, N83, 87 to 89, and M97; these read RSG and LID.

Belongs to the dUTPase family. It depends on Mg(2+) as a cofactor.

The catalysed reaction is dUTP + H2O = dUMP + diphosphate + H(+). It functions in the pathway pyrimidine metabolism; dUMP biosynthesis; dUMP from dCTP (dUTP route): step 2/2. This enzyme is involved in nucleotide metabolism: it produces dUMP, the immediate precursor of thymidine nucleotides and it decreases the intracellular concentration of dUTP so that uracil cannot be incorporated into DNA. The sequence is that of Deoxyuridine 5'-triphosphate nucleotidohydrolase from Sodalis glossinidius (strain morsitans).